Here is a 223-residue protein sequence, read N- to C-terminus: Type 3 secretion system stator protein (223 aa).

The protein belongs to the SctL stator family. As to quaternary structure, the core secretion machinery of the T3SS is composed of approximately 20 different proteins, including cytoplasmic components, a base, an export apparatus and a needle. This subunit is part of the cytosolic complex. Interacts directly with YscN/SctN (T3SS ATPase) and YscQ/SctQ (the major sorting platform component). Forms homodimers.

It is found in the cytoplasm. In terms of biological role, component of the type III secretion system (T3SS), also called injectisome, which is used to inject bacterial effector proteins into eukaryotic host cells. Acts as a regulator of the YscN/SctN ATPase activity. Overexpression of YscL/SctL abolishes type III secretion and down-regulates the expression of secretion apparatus components. This chain is Type 3 secretion system stator protein, found in Yersinia enterocolitica.